Reading from the N-terminus, the 613-residue chain is UvrABC system protein C (613 aa).

The 79-residue stretch at 20 to 98 folds into the GIY-YIG domain; sequence ERPGVYLMYD…IKRHKPRYNI (79 aa). The UVR domain maps to 209–244; it reads FDVIESLGHKMQQASDEFEFEKAALYRDKISALRAI.

Belongs to the UvrC family. As to quaternary structure, interacts with UvrB in an incision complex.

The protein localises to the cytoplasm. In terms of biological role, the UvrABC repair system catalyzes the recognition and processing of DNA lesions. UvrC both incises the 5' and 3' sides of the lesion. The N-terminal half is responsible for the 3' incision and the C-terminal half is responsible for the 5' incision. This Hydrogenovibrio crunogenus (strain DSM 25203 / XCL-2) (Thiomicrospira crunogena) protein is UvrABC system protein C.